Here is a 535-residue protein sequence, read N- to C-terminus: Large neutral amino acids transporter small subunit 2 (535 aa).

Residues 1 to 10 (MEKGARHRHN) show a composition bias toward basic residues. Positions 1–30 (MEKGARHRHNTDKNHAGGSESEDFPEASSG) are disordered. Topologically, residues 1-44 (MEKGARHRHNTDKNHAGGSESEDFPEASSGGGGVALKKEIGLVS) are cytoplasmic. A phosphoserine mark is found at serine 19, serine 28, and serine 29. A helical transmembrane segment spans residues 45 to 65 (ACGIIVGNIIGSGIFVSPKGV). Isoleucine 53 serves as a coordination point for L-leucine. Residues 66–73 (LENAGSVG) lie on the Extracellular side of the membrane. A helical transmembrane segment spans residues 74–95 (LAVIVWIVTGLITAVGALCYAE). Residues 96–116 (LGVTIPKSGGDYSYVKDIFGG) are Cytoplasmic-facing. A helical membrane pass occupies residues 117 to 149 (LAGFLRLWIAVLVIYPTNQAVIALTFSNYVLQP). Asparagine 134 lines the L-tryptophan pocket. Topologically, residues 150–157 (LFPTCFPP) are extracellular. A helical transmembrane segment spans residues 158 to 178 (DSGLRLLAAICLLLLTWVNCS). The Cytoplasmic portion of the chain corresponds to 179-181 (SVR). The helical transmembrane segment at 182–210 (WATRVQDIFTAGKLLALALIIIMGVVQIC) threads the bilayer. The Extracellular portion of the chain corresponds to 211 to 230 (KGEYFWLEPKNAFDNFQEPD). Residues 231 to 252 (IGLIALAFLQGSFAYGGWNFLN) form a helical membrane-spanning segment. L-leucine is bound at residue glycine 246. Residues 253–265 (YVTEELVDPYKNL) are Cytoplasmic-facing. Residues 266–287 (PRAIFISIPLVTFVYVFANVAY) traverse the membrane as a helical segment. At 288–312 (ITAMSPQELLASNAVAVTFGEKLLG) the chain is on the extracellular side. The helical transmembrane segment at 313-338 (VMAWIMPISVALSTFGGVNGSLFTSS) threads the bilayer. Residues 339–364 (RLFFAGAREGHLPSVLAMIHVKRCTP) lie on the Cytoplasmic side of the membrane. Residues 365–382 (IPALLFTCLSTLLMLVTS) traverse the membrane as a helical segment. Over 383–386 (DMYT) the chain is Extracellular. The chain crosses the membrane as a helical span at residues 387-408 (LINYVGFINYLFYGVTVAGQIV). Asparagine 395 lines the L-tryptophan pocket. The Cytoplasmic segment spans residues 409 to 423 (LRWKKPDIPRPIKIN). Transmembrane regions (helical) follow at residues 424–446 (LLFP…WSEP) and 447–466 (VVCG…YFLG). Residues 467 to 535 (VYWQHKPKCF…DKDSLEQSQP (69 aa)) lie on the Cytoplasmic side of the membrane. The tract at residues 500-535 (GGSGTEGTREDMEEQQQPICQPSPGKDKDSLEQSQP) is disordered. The span at 524–535 (GKDKDSLEQSQP) shows a compositional bias: basic and acidic residues. Serine 529 carries the phosphoserine modification.

The protein belongs to the amino acid-polyamine-organocation (APC) superfamily. L-type amino acid transporter (LAT) (TC 2.A.3.8) family. Disulfide-linked heterodimer composed of the catalytic light chain subunit SLC7A8 and the heavy chain subunit SLC3A2. SLC3A2 acts as a chaperone for correct plasma membrane trafficking and stabilization of SLC7A8 and modulates the substrate affinity and specificity of SLC7A8. ICAM-1 associates with the heterodimer SLC3A2/SLC7A8; facilitates leucine uptake. As to expression, mainly expressed in kidney and small intestine.

Its subcellular location is the cell membrane. It localises to the basolateral cell membrane. It carries out the reaction L-histidine(in) + L-phenylalanine(out) = L-histidine(out) + L-phenylalanine(in). The enzyme catalyses L-tryptophan(in) + L-phenylalanine(out) = L-tryptophan(out) + L-phenylalanine(in). It catalyses the reaction L-isoleucine(in) + L-phenylalanine(out) = L-isoleucine(out) + L-phenylalanine(in). The catalysed reaction is L-valine(in) + L-phenylalanine(out) = L-valine(out) + L-phenylalanine(in). It carries out the reaction L-leucine(in) + L-phenylalanine(out) = L-leucine(out) + L-phenylalanine(in). The enzyme catalyses L-glutamine(in) + L-phenylalanine(out) = L-glutamine(out) + L-phenylalanine(in). It catalyses the reaction L-cysteine(in) + L-phenylalanine(out) = L-cysteine(out) + L-phenylalanine(in). The catalysed reaction is L-phenylalanine(out) + L-methionine(in) = L-phenylalanine(in) + L-methionine(out). It carries out the reaction L-leucine(out) + L-methionine(in) = L-leucine(in) + L-methionine(out). The enzyme catalyses L-cysteine(out) + L-methionine(in) = L-cysteine(in) + L-methionine(out). It catalyses the reaction S-methylmercury-L-cysteine(out) + L-methionine(in) = S-methylmercury-L-cysteine(in) + L-methionine(out). The catalysed reaction is S-methylmercury-L-cysteine(in) + L-leucine(out) = S-methylmercury-L-cysteine(out) + L-leucine(in). It carries out the reaction S-methylmercury-L-cysteine(in) + L-phenylalanine(out) = S-methylmercury-L-cysteine(out) + L-phenylalanine(in). The enzyme catalyses L-phenylalanine(out) + L-serine(in) = L-phenylalanine(in) + L-serine(out). It catalyses the reaction L-phenylalanine(out) + glycine(in) = L-phenylalanine(in) + glycine(out). The catalysed reaction is L-phenylalanine(out) + L-alanine(in) = L-phenylalanine(in) + L-alanine(out). It carries out the reaction 3,3',5-triiodo-L-thyronine(out) = 3,3',5-triiodo-L-thyronine(in). The enzyme catalyses 3,3'-diiodo-L-thyronine(out) = 3,3'-diiodo-L-thyronine(in). It catalyses the reaction L-dopa(out) + L-phenylalanine(in) = L-dopa(in) + L-phenylalanine(out). Its activity is regulated as follows. The transporter activity is inhibited by 2-aminobicyclo-(2,2,1)heptane-2-carboxylic acid (BCH) (a specific inhibitor of system L transport). In terms of biological role, associates with SLC3A2 to form a functional heterodimeric complex that translocates small and large neutral amino acids with broad specificity and a stoichiometry of 1:1. Functions as amino acid antiporter mediating the influx of extracellular essential amino acids mainly in exchange with the efflux of highly concentrated intracellular amino acids. Has relatively symmetrical selectivities but strongly asymmetrical substrate affinities at both the intracellular and extracellular sides of the transporter. This asymmetry allows SLC7A8 to regulate intracellular amino acid pools (mM concentrations) by exchange with external amino acids (uM concentration range), equilibrating the relative concentrations of different amino acids across the plasma membrane instead of mediating their net uptake. May play an essential role in the reabsorption of neutral amino acids from the epithelial cells to the bloodstream in the kidney. Involved in the uptake of methylmercury (MeHg) when administered as the L-cysteine or D,L-homocysteine complexes, and hence plays a role in metal ion homeostasis and toxicity. Involved in the cellular activity of small molecular weight nitrosothiols, via the stereoselective transport of L-nitrosocysteine (L-CNSO) across the transmembrane. Imports the thyroid hormone diiodothyronine (T2) and to a smaller extent triiodothyronine (T3) but not rT 3 or thyroxine (T4). Mediates the uptake of L-DOPA. May participate in auditory function. The polypeptide is Large neutral amino acids transporter small subunit 2 (Oryctolagus cuniculus (Rabbit)).